The primary structure comprises 85 residues: MKVTLIAILTCATVLVLHTTAAEELEAESQLMEVGMPDTELAAVDEERLFECSVSCEIEKEGNKDCKKKKCKGGWKCKFNMCVKV.

The first 22 residues, 1 to 22 (MKVTLIAILTCATVLVLHTTAA), serve as a signal peptide directing secretion. Positions 23-48 (EELEAESQLMEVGMPDTELAAVDEER) are excised as a propeptide. 3 disulfide bridges follow: C52–C66, C56–C77, and C71–C82.

It belongs to the neurotoxin 12 (Hwtx-2) family. 02 (Hwtx-2) subfamily. In terms of assembly, monomer. In terms of tissue distribution, expressed by the venom gland.

It localises to the secreted. Functionally, neurotoxin active on both insects and mammals. This Cyriopagopus hainanus (Chinese bird spider) protein is U4-theraphotoxin-Hhn1a.